We begin with the raw amino-acid sequence, 324 residues long: Hydroxyacylglutathione hydrolase 2, mitochondrial (324 aa).

Residues 1–64 (MQTISKASSA…KSIRVSKFCS (64 aa)) constitute a mitochondrion transit peptide. Zn(2+)-binding residues include His-124 and His-126. Residues Asp-128 and His-129 each coordinate Fe cation. Zn(2+)-binding residues include His-182 and Asp-201. Residues Asp-201 and His-239 each coordinate Fe cation.

The protein belongs to the metallo-beta-lactamase superfamily. Glyoxalase II family. In terms of assembly, monomer. Fe(3+) is required as a cofactor. It depends on Fe(2+) as a cofactor. The cofactor is Zn(2+).

Its subcellular location is the mitochondrion. It carries out the reaction an S-(2-hydroxyacyl)glutathione + H2O = a 2-hydroxy carboxylate + glutathione + H(+). It participates in secondary metabolite metabolism; methylglyoxal degradation; (R)-lactate from methylglyoxal: step 2/2. Thiolesterase that catalyzes the hydrolysis of S-D-lactoyl-glutathione to form glutathione and D-lactic acid. The polypeptide is Hydroxyacylglutathione hydrolase 2, mitochondrial (Arabidopsis thaliana (Mouse-ear cress)).